A 460-amino-acid polypeptide reads, in one-letter code: Spermatogenesis-defective protein 39 homolog (460 aa).

At threonine 21 the chain carries Phosphothreonine. Residues 70–101 (SIKETAGSSGSTSEGREQMKGRNSFYTQLPKP) form a disordered region. Residues 73-82 (ETAGSSGSTS) are compositionally biased toward low complexity. At threonine 115 the chain carries Phosphothreonine. A phosphoserine mark is found at serine 119, serine 122, and serine 128. Residues 121 to 133 (QSLSDALSDTPAK) show a composition bias toward polar residues. A disordered region spans residues 121 to 141 (QSLSDALSDTPAKTYSPELGR). At threonine 130 the chain carries Phosphothreonine.

Belongs to the SPE39 family. In terms of assembly, interacts with VPS33B. Associates with the homotypic fusion and vacuole protein sorting (HOPS) complex; impaired by VPS33B. Interacts with RAB11A.

Its subcellular location is the cytoplasm. The protein localises to the cytoplasmic vesicle. It is found in the early endosome. It localises to the recycling endosome. The protein resides in the late endosome. Its function is as follows. Proposed to be involved in endosomal maturation implicating in part VPS33B. In epithelial cells, the VPS33B:VIPAS39 complex may play a role in the apical RAB11A-dependent recycling pathway and in the maintenance of the apical-basolateral polarity. May play a role in lysosomal trafficking, probably via association with the core HOPS complex in a discrete population of endosomes; the functions seems to be independent of VPS33B. May play a role in vesicular trafficking during spermatogenesis. May be involved in direct or indirect transcriptional regulation of E-cadherin. This Rattus norvegicus (Rat) protein is Spermatogenesis-defective protein 39 homolog (Vipas39).